Consider the following 109-residue polypeptide: Nucleoid-associated protein Plut_1285 (109 aa).

The protein belongs to the YbaB/EbfC family. In terms of assembly, homodimer.

The protein resides in the cytoplasm. Its subcellular location is the nucleoid. Functionally, binds to DNA and alters its conformation. May be involved in regulation of gene expression, nucleoid organization and DNA protection. This is Nucleoid-associated protein Plut_1285 from Chlorobium luteolum (strain DSM 273 / BCRC 81028 / 2530) (Pelodictyon luteolum).